The primary structure comprises 391 residues: Formate-dependent phosphoribosylglycinamide formyltransferase (391 aa).

Residues 20 to 21 (EL) and glutamate 80 contribute to the N(1)-(5-phospho-beta-D-ribosyl)glycinamide site. ATP contacts are provided by residues arginine 112, lysine 153, 158-163 (SSGKGQ), 193-196 (EGFI), and glutamate 201. An ATP-grasp domain is found at 117–306 (RLAAEELGLT…EFALHVRAFT (190 aa)). Mg(2+) is bound by residues glutamate 265 and glutamate 277. N(1)-(5-phospho-beta-D-ribosyl)glycinamide contacts are provided by residues aspartate 284, lysine 354, and 361–362 (RR).

It belongs to the PurK/PurT family. As to quaternary structure, homodimer.

The catalysed reaction is N(1)-(5-phospho-beta-D-ribosyl)glycinamide + formate + ATP = N(2)-formyl-N(1)-(5-phospho-beta-D-ribosyl)glycinamide + ADP + phosphate + H(+). Its pathway is purine metabolism; IMP biosynthesis via de novo pathway; N(2)-formyl-N(1)-(5-phospho-D-ribosyl)glycinamide from N(1)-(5-phospho-D-ribosyl)glycinamide (formate route): step 1/1. In terms of biological role, involved in the de novo purine biosynthesis. Catalyzes the transfer of formate to 5-phospho-ribosyl-glycinamide (GAR), producing 5-phospho-ribosyl-N-formylglycinamide (FGAR). Formate is provided by PurU via hydrolysis of 10-formyl-tetrahydrofolate. This is Formate-dependent phosphoribosylglycinamide formyltransferase from Vibrio vulnificus (strain CMCP6).